The primary structure comprises 226 residues: ATP-dependent dethiobiotin synthetase BioD (226 aa).

Position 12–17 (12–17) interacts with ATP; the sequence is GVGKTV. A Mg(2+)-binding site is contributed by threonine 16. Lysine 37 is a catalytic residue. Residue threonine 41 coordinates substrate. ATP contacts are provided by residues aspartate 49, 108–111, and 197–199; these read EGAG and PAG. Aspartate 49 and glutamate 108 together coordinate Mg(2+).

This sequence belongs to the dethiobiotin synthetase family. Homodimer. Mg(2+) is required as a cofactor.

The protein localises to the cytoplasm. It carries out the reaction (7R,8S)-7,8-diammoniononanoate + CO2 + ATP = (4R,5S)-dethiobiotin + ADP + phosphate + 3 H(+). It participates in cofactor biosynthesis; biotin biosynthesis; biotin from 7,8-diaminononanoate: step 1/2. In terms of biological role, catalyzes a mechanistically unusual reaction, the ATP-dependent insertion of CO2 between the N7 and N8 nitrogen atoms of 7,8-diaminopelargonic acid (DAPA, also called 7,8-diammoniononanoate) to form a ureido ring. This is ATP-dependent dethiobiotin synthetase BioD from Mycobacterium avium (strain 104).